The chain runs to 250 residues: Thermostable monoacylglycerol lipase (250 aa).

Phe-29 is a substrate binding site. Ser-97 (nucleophile) is an active-site residue. Residue Met-98 participates in substrate binding. Active-site charge relay system residues include Asp-196 and His-226.

The protein belongs to the lipase/esterase LIP3/BchO family. Monomer.

It catalyses the reaction Hydrolyzes glycerol monoesters of long-chain fatty acids.. Its activity is regulated as follows. Not inhibited by cholate, but slightly inhibited by triton X-100 and deoxycholate. Completely inhibited by PMSF (phenylmethylsulfonyl fluoride) at a concentration of 200 uM. Hydrolyzes monoacylglycerols, with the highest activity occurring with 1-monolauroylglycerol. This chain is Thermostable monoacylglycerol lipase, found in Bacillus sp. (strain H-257).